Here is a 121-residue protein sequence, read N- to C-terminus: Small ribosomal subunit protein uS13 (121 aa).

Residues 92-121 form a disordered region; the sequence is RKGLPMRGQRTRTNARTRKGPRRAAQALKK.

It belongs to the universal ribosomal protein uS13 family. As to quaternary structure, part of the 30S ribosomal subunit. Forms a loose heterodimer with protein S19. Forms two bridges to the 50S subunit in the 70S ribosome.

In terms of biological role, located at the top of the head of the 30S subunit, it contacts several helices of the 16S rRNA. In the 70S ribosome it contacts the 23S rRNA (bridge B1a) and protein L5 of the 50S subunit (bridge B1b), connecting the 2 subunits; these bridges are implicated in subunit movement. Contacts the tRNAs in the A and P-sites. The protein is Small ribosomal subunit protein uS13 of Burkholderia cenocepacia (strain ATCC BAA-245 / DSM 16553 / LMG 16656 / NCTC 13227 / J2315 / CF5610) (Burkholderia cepacia (strain J2315)).